A 185-amino-acid polypeptide reads, in one-letter code: ATP synthase subunit b, chloroplastic (185 aa).

A helical transmembrane segment spans residues 31–49 (LINSGVVLGLPVYSGKGVL).

Belongs to the ATPase B chain family. F-type ATPases have 2 components, F(1) - the catalytic core - and F(0) - the membrane proton channel. F(1) has five subunits: alpha(3), beta(3), gamma(1), delta(1), epsilon(1). F(0) has four main subunits: a(1), b(1), b'(1) and c(10-14). The alpha and beta chains form an alternating ring which encloses part of the gamma chain. F(1) is attached to F(0) by a central stalk formed by the gamma and epsilon chains, while a peripheral stalk is formed by the delta, b and b' chains.

The protein localises to the plastid. It is found in the chloroplast thylakoid membrane. In terms of biological role, f(1)F(0) ATP synthase produces ATP from ADP in the presence of a proton or sodium gradient. F-type ATPases consist of two structural domains, F(1) containing the extramembraneous catalytic core and F(0) containing the membrane proton channel, linked together by a central stalk and a peripheral stalk. During catalysis, ATP synthesis in the catalytic domain of F(1) is coupled via a rotary mechanism of the central stalk subunits to proton translocation. Functionally, component of the F(0) channel, it forms part of the peripheral stalk, linking F(1) to F(0). This chain is ATP synthase subunit b, chloroplastic, found in Huperzia lucidula (Shining clubmoss).